The following is a 35-amino-acid chain: MSDINATRLPIWGIGCDPCVGDDVTALLTRGEALC.

Residues Met1 to Pro10 constitute a propeptide that is removed on maturation. Residues Ile11–Pro18 constitute a cross-link (cyclopeptide (Ile-Pro)). The 2'-cysteinyl-6'-hydroxytryptophan sulfoxide (Trp-Cys) cross-link spans Trp12 to Cys16. A propeptide spanning residues Cys19 to Cys35 is cleaved from the precursor.

It belongs to the MSDIN fungal toxin family. Post-translationally, processed by the macrocyclase-peptidase enzyme POPB to yield a toxic cyclic octapeptide. POPB first removes 10 residues from the N-terminus. Conformational trapping of the remaining peptide forces the enzyme to release this intermediate rather than proceed to macrocyclization. The enzyme rebinds the remaining peptide in a different conformation and catalyzes macrocyclization of the N-terminal 8 residues. In terms of tissue distribution, expressed in basidiocarps.

In terms of biological role, toxin belonging to the bicyclic octapeptides amatoxins that acts by binding non-competitively to RNA polymerase II and greatly slowing the elongation of transcripts from target promoters. In Amanita exitialis (Guangzhou destroying angel), this protein is Beta-amanitin proprotein.